We begin with the raw amino-acid sequence, 266 residues long: NAD-capped RNA hydrolase NudC (266 aa).

Position 74 (Arg-74) interacts with substrate. Cys-103, Cys-106, Cys-121, and Cys-124 together coordinate Zn(2+). Substrate is bound at residue Tyr-129. Positions 130–253 constitute a Nudix hydrolase domain; the sequence is PRVSPCIIVA…TIARVLIDET (124 aa). Ala-163, Glu-179, and Glu-183 together coordinate a divalent metal cation. The Nudix box motif lies at 164 to 185; sequence GFVEAGETLEQCVAREVEEETG. 197 to 204 contacts substrate; sequence QPWAFPSN. Glu-224 contributes to the a divalent metal cation binding site. Substrate is bound at residue Ala-246.

It belongs to the Nudix hydrolase family. NudC subfamily. Homodimer. It depends on Mg(2+) as a cofactor. Requires Mn(2+) as cofactor. Zn(2+) is required as a cofactor.

The enzyme catalyses a 5'-end NAD(+)-phospho-ribonucleoside in mRNA + H2O = a 5'-end phospho-adenosine-phospho-ribonucleoside in mRNA + beta-nicotinamide D-ribonucleotide + 2 H(+). It carries out the reaction NAD(+) + H2O = beta-nicotinamide D-ribonucleotide + AMP + 2 H(+). It catalyses the reaction NADH + H2O = reduced beta-nicotinamide D-ribonucleotide + AMP + 2 H(+). In terms of biological role, mRNA decapping enzyme that specifically removes the nicotinamide adenine dinucleotide (NAD) cap from a subset of mRNAs by hydrolyzing the diphosphate linkage to produce nicotinamide mononucleotide (NMN) and 5' monophosphate mRNA. The NAD-cap is present at the 5'-end of some mRNAs and stabilizes RNA against 5'-processing. Has preference for mRNAs with a 5'-end purine. Catalyzes the hydrolysis of a broad range of dinucleotide pyrophosphates. This is NAD-capped RNA hydrolase NudC from Photobacterium profundum (strain SS9).